A 23-amino-acid polypeptide reads, in one-letter code: uncharacterized protein (23 aa).

The helical transmembrane segment at 3 to 23 (YFFMGISFMVIVWAGTFALMI) threads the bilayer.

Its subcellular location is the cell inner membrane. This is an uncharacterized protein from Escherichia coli (strain K12).